Consider the following 709-residue polypeptide: MALDVLNDLNQIRNIGIMAHIDAGKTTTTERILFYTGKNYKIGETHDGASTMDFMAQEQERGITIQSAATTCFWNRQTHDEKQKFQINIIDTPGHVDFTAEVERSLRVLDGAVAVFDGKEGVEPQSETVWRQADKYGVPRICFINKMDKLGADFYYSVDTIKTKLGATPLVVQLPIGAENDFAGVVDLIRMKAYVWNDVSGDLGAHYDTTDIPADLQDKAEQYRSELLDQVAESDEELLEKYLESGELTEDEIRAGIRKLTINREAYPVLCGSAFKDKGVQPMLDAVVDYLPSPEDVPSIVGFDPQDESIEIDRKPTTDDPFSALVFKISTHPFYGKLVFVRVYSGSVKPGDTVLDSTKEKKERVGKIFQMHADKENPVDAAEAGNIYTFVGLKNVTTGDTLCDEKSPISLESMTFPDPVIEVAVEPKTKADQEKMSIALAKLSDEDPTFQVKTDEESGQTLISGMGELQLDIIVDRMRREFKVECNVGNPQVAYRETIRKAVMNQEYTHKKQTGGSGQFAKVLMNFEPLDTENGETYEFVNEVTGGHITKEFIPSIDAGVQEAMESGILAGFPVVGVKATVTDGQVHDVDSSEMAFKIAGSMCFKEAAPKAKPVILEPIMAVEVRTPEEYMGDVMGDINARRGSIQSMTDSTGVKVIDAKVPLSEMFGYIGDLRSKTQGRAMFTMQMDSYAEVPKNVSEEIIKAQRGE.

The region spanning 10–295 (NQIRNIGIMA…AVVDYLPSPE (286 aa)) is the tr-type G domain. GTP contacts are provided by residues 19–26 (AHIDAGKT), 91–95 (DTPGH), and 145–148 (NKMD).

This sequence belongs to the TRAFAC class translation factor GTPase superfamily. Classic translation factor GTPase family. EF-G/EF-2 subfamily.

It localises to the cytoplasm. Functionally, catalyzes the GTP-dependent ribosomal translocation step during translation elongation. During this step, the ribosome changes from the pre-translocational (PRE) to the post-translocational (POST) state as the newly formed A-site-bound peptidyl-tRNA and P-site-bound deacylated tRNA move to the P and E sites, respectively. Catalyzes the coordinated movement of the two tRNA molecules, the mRNA and conformational changes in the ribosome. The protein is Elongation factor G of Bifidobacterium adolescentis (strain ATCC 15703 / DSM 20083 / NCTC 11814 / E194a).